A 158-amino-acid chain; its full sequence is Ribosome maturation factor RimP (158 aa).

It belongs to the RimP family.

It localises to the cytoplasm. In terms of biological role, required for maturation of 30S ribosomal subunits. The polypeptide is Ribosome maturation factor RimP (Streptococcus suis (strain 98HAH33)).